The chain runs to 390 residues: uncharacterized protein (390 aa).

11 consecutive transmembrane segments (helical) span residues 10–30 (LSFC…LPIL), 43–63 (FLIG…QIPF), 81–101 (FMFF…GLII), 134–154 (AIGV…PIIV), 162–182 (IFWI…FFVP), 213–233 (FYLG…MIPN), 246–266 (WKVY…FIFY), 272–292 (ILEN…IIFL), 298–318 (LLFL…LEVF), 341–361 (TSQF…YSFL), and 363–383 (FSQI…FSFF).

The protein belongs to the major facilitator superfamily.

It localises to the cell membrane. This is an uncharacterized protein from Buchnera aphidicola subsp. Acyrthosiphon pisum (strain APS) (Acyrthosiphon pisum symbiotic bacterium).